The following is a 263-amino-acid chain: Isoprenyl transferase (263 aa).

The active site involves D38. A Mg(2+)-binding site is contributed by D38. Residues 39-42 (GNRR), H55, and 83-85 (STD) contribute to the substrate site. The active-site Proton acceptor is the N86. Substrate is bound by residues F87, R89, R212, and 218–220 (RLS). E231 contacts Mg(2+).

This sequence belongs to the UPP synthase family. As to quaternary structure, homodimer. It depends on Mg(2+) as a cofactor.

Functionally, catalyzes the condensation of isopentenyl diphosphate (IPP) with allylic pyrophosphates generating different type of terpenoids. The protein is Isoprenyl transferase of Thermus thermophilus (strain ATCC 27634 / DSM 579 / HB8).